A 577-amino-acid polypeptide reads, in one-letter code: 2-succinyl-5-enolpyruvyl-6-hydroxy-3-cyclohexene-1-carboxylate synthase (577 aa).

Belongs to the TPP enzyme family. MenD subfamily. Homodimer. Requires Mg(2+) as cofactor. It depends on Mn(2+) as a cofactor. Thiamine diphosphate serves as cofactor.

The catalysed reaction is isochorismate + 2-oxoglutarate + H(+) = 5-enolpyruvoyl-6-hydroxy-2-succinyl-cyclohex-3-ene-1-carboxylate + CO2. The protein operates within quinol/quinone metabolism; 1,4-dihydroxy-2-naphthoate biosynthesis; 1,4-dihydroxy-2-naphthoate from chorismate: step 2/7. It functions in the pathway quinol/quinone metabolism; menaquinone biosynthesis. Functionally, catalyzes the thiamine diphosphate-dependent decarboxylation of 2-oxoglutarate and the subsequent addition of the resulting succinic semialdehyde-thiamine pyrophosphate anion to isochorismate to yield 2-succinyl-5-enolpyruvyl-6-hydroxy-3-cyclohexene-1-carboxylate (SEPHCHC). This Christiangramia forsetii (strain DSM 17595 / CGMCC 1.15422 / KT0803) (Gramella forsetii) protein is 2-succinyl-5-enolpyruvyl-6-hydroxy-3-cyclohexene-1-carboxylate synthase.